Consider the following 231-residue polypeptide: NADH-ubiquinone oxidoreductase chain 4 (231 aa).

Transmembrane regions (helical) follow at residues 1 to 21 (PIAGSMVLAAILLKLGGYGII), 34 to 54 (LFIPFITLALWGATLANLTCL), 61 to 80 (SLIAYSSISHMGLVVAAITI), 84 to 106 (WGLSGAMALMIAHGFTSSALFCL), 118 to 138 (VLILTRGLHNILPMATTWWLL), and 156 to 178 (LLIMSSLFNWCPTTIILLGLSML).

This sequence belongs to the complex I subunit 4 family.

It is found in the mitochondrion membrane. It catalyses the reaction a ubiquinone + NADH + 5 H(+)(in) = a ubiquinol + NAD(+) + 4 H(+)(out). Its function is as follows. Core subunit of the mitochondrial membrane respiratory chain NADH dehydrogenase (Complex I) that is believed to belong to the minimal assembly required for catalysis. Complex I functions in the transfer of electrons from NADH to the respiratory chain. The immediate electron acceptor for the enzyme is believed to be ubiquinone. This chain is NADH-ubiquinone oxidoreductase chain 4 (MT-ND4), found in Azemiops feae (Fea's viper).